A 217-amino-acid chain; its full sequence is Putative thymidylate synthase (217 aa).

Cysteine 139 is a catalytic residue.

The protein belongs to the thymidylate synthase family. Archaeal-type ThyA subfamily. Monomer.

It is found in the cytoplasm. Its pathway is pyrimidine metabolism; dTTP biosynthesis. Functionally, may catalyze the biosynthesis of dTMP using an unknown cosubstrate. The chain is Putative thymidylate synthase from Methanosarcina mazei (strain ATCC BAA-159 / DSM 3647 / Goe1 / Go1 / JCM 11833 / OCM 88) (Methanosarcina frisia).